We begin with the raw amino-acid sequence, 331 residues long: UPF0194 membrane protein YbhG (331 aa).

An N-terminal signal peptide occupies residues 1 to 19 (MKKPVVIGLAIAAIVAVIA). Positions 107–208 (EEIAQAAAAV…LDLQDTTLIA (102 aa)) form a coiled coil.

It belongs to the UPF0194 family.

It localises to the periplasm. The chain is UPF0194 membrane protein YbhG from Salmonella agona (strain SL483).